We begin with the raw amino-acid sequence, 925 residues long: Proto-oncogene DBL (925 aa).

A CRAL-TRIO domain is found at 1-88 (MAEANPRRGK…ELGGTLQYCH (88 aa)). The stretch at 221–322 (WKFEQDFQQL…EIKAKRIQLS (102 aa)) is one Spectrin repeat. One can recognise a DH domain in the interval 495-675 (LKNHVLNELI…LDLLKSVNDS (181 aa)). A PH domain is found at 687 to 809 (NLNELGKMIM…WLKEIRNILL (123 aa)).

This sequence belongs to the MCF2 family. As to quaternary structure, interacts with an array of inositol phospholipids such as phosphatidylinositol 3-phosphate (PI3P), phosphatidylinositol 4-phosphate (PI4P) and phosphatidylinositol 5-phosphate (PI5P). May interact with CCPG1. Post-translationally, phosphorylation by TNK2 enhances guanine nucleotide exchange factor (GEF) activity toward Rho family proteins. As to expression, isoform 1 is expressed only in brain. Isoform 3 is expressed in heart, kidney, spleen, liver and testis. Isoform 4 is expressed in brain, heart, kidney, testis, placenta, stomach and peripheral blood. The protein is detectable in brain, heart, kidney, intestine, muscle, lung and testis.

The protein localises to the cytoplasm. The protein resides in the membrane. Functionally, guanine nucleotide exchange factor (GEF) that modulates the Rho family of GTPases. Promotes the conversion of some member of the Rho family GTPase from the GDP-bound to the GTP-bound form. Isoform 1 exhibits no activity toward RHOA, RAC1 or CDC42. Isoform 2 exhibits decreased GEF activity toward CDC42. Isoform 3 exhibits a weak but significant activity toward RAC1 and CDC42. Isoform 4 exhibits significant activity toward RHOA and CDC42. The truncated DBL oncogene is active toward RHOA, RAC1 and CDC42. The protein is Proto-oncogene DBL (MCF2) of Homo sapiens (Human).